We begin with the raw amino-acid sequence, 179 residues long: MDTTGASESSQPIRVNLKPDPLASFTQVIPPLALETTWTCPANSHAPTPSPLYGVKRLCALRATCGRADDLHAFLIGLGRRDKPSESPMYVDLQPFCSLLNSQRLLPEMANYNTLCDAPFSAATQQMMLESGQLGVHLAAIGYHCHCKSPFSAECWTGASEAYDHVVCGGKARAAVGGL.

The protein belongs to the alphaherpesvirinae HHV-1 UL55 family.

It is found in the virion tegument. The protein resides in the host nucleus matrix. The chain is Tegument protein UL55 homolog from Homo sapiens (Human).